We begin with the raw amino-acid sequence, 129 residues long: Large ribosomal subunit protein bL17 (129 aa).

Belongs to the bacterial ribosomal protein bL17 family. Part of the 50S ribosomal subunit. Contacts protein L32.

The chain is Large ribosomal subunit protein bL17 from Serratia proteamaculans (strain 568).